The chain runs to 258 residues: Imidazole glycerol phosphate synthase subunit HisF (258 aa).

Residues Asp-11 and Asp-130 contribute to the active site.

Belongs to the HisA/HisF family. In terms of assembly, heterodimer of HisH and HisF.

It localises to the cytoplasm. It carries out the reaction 5-[(5-phospho-1-deoxy-D-ribulos-1-ylimino)methylamino]-1-(5-phospho-beta-D-ribosyl)imidazole-4-carboxamide + L-glutamine = D-erythro-1-(imidazol-4-yl)glycerol 3-phosphate + 5-amino-1-(5-phospho-beta-D-ribosyl)imidazole-4-carboxamide + L-glutamate + H(+). It functions in the pathway amino-acid biosynthesis; L-histidine biosynthesis; L-histidine from 5-phospho-alpha-D-ribose 1-diphosphate: step 5/9. In terms of biological role, IGPS catalyzes the conversion of PRFAR and glutamine to IGP, AICAR and glutamate. The HisF subunit catalyzes the cyclization activity that produces IGP and AICAR from PRFAR using the ammonia provided by the HisH subunit. This is Imidazole glycerol phosphate synthase subunit HisF from Blochmanniella pennsylvanica (strain BPEN).